A 255-amino-acid chain; its full sequence is UPF0246 protein Caul_4480 (255 aa).

It belongs to the UPF0246 family.

This Caulobacter sp. (strain K31) protein is UPF0246 protein Caul_4480.